Reading from the N-terminus, the 373-residue chain is CCA-adding enzyme (373 aa).

Residues Gly-8 and Arg-11 each coordinate ATP. 2 residues coordinate CTP: Gly-8 and Arg-11. Residues Asp-21 and Asp-23 each coordinate Mg(2+). Residues Arg-91, Arg-137, and Arg-140 each contribute to the ATP site. Residues Arg-91, Arg-137, and Arg-140 each contribute to the CTP site.

The protein belongs to the tRNA nucleotidyltransferase/poly(A) polymerase family. Bacterial CCA-adding enzyme type 2 subfamily. The cofactor is Mg(2+).

It carries out the reaction a tRNA precursor + 2 CTP + ATP = a tRNA with a 3' CCA end + 3 diphosphate. The catalysed reaction is a tRNA with a 3' CCA end + 2 CTP + ATP = a tRNA with a 3' CCACCA end + 3 diphosphate. In terms of biological role, catalyzes the addition and repair of the essential 3'-terminal CCA sequence in tRNAs without using a nucleic acid template. Adds these three nucleotides in the order of C, C, and A to the tRNA nucleotide-73, using CTP and ATP as substrates and producing inorganic pyrophosphate. tRNA 3'-terminal CCA addition is required both for tRNA processing and repair. Also involved in tRNA surveillance by mediating tandem CCA addition to generate a CCACCA at the 3' terminus of unstable tRNAs. While stable tRNAs receive only 3'-terminal CCA, unstable tRNAs are marked with CCACCA and rapidly degraded. The protein is CCA-adding enzyme of Marinobacter nauticus (strain ATCC 700491 / DSM 11845 / VT8) (Marinobacter aquaeolei).